Reading from the N-terminus, the 258-residue chain is 5'-nucleotidase SurE (258 aa).

D9, D10, S42, and N96 together coordinate a divalent metal cation.

This sequence belongs to the SurE nucleotidase family. Requires a divalent metal cation as cofactor.

The protein resides in the cytoplasm. The enzyme catalyses a ribonucleoside 5'-phosphate + H2O = a ribonucleoside + phosphate. Functionally, nucleotidase that shows phosphatase activity on nucleoside 5'-monophosphates. This is 5'-nucleotidase SurE from Campylobacter jejuni subsp. jejuni serotype O:2 (strain ATCC 700819 / NCTC 11168).